Consider the following 73-residue polypeptide: Putative membrane protein insertion efficiency factor (73 aa).

It belongs to the UPF0161 family.

The protein localises to the cell inner membrane. Its function is as follows. Could be involved in insertion of integral membrane proteins into the membrane. The chain is Putative membrane protein insertion efficiency factor from Bacteroides fragilis (strain ATCC 25285 / DSM 2151 / CCUG 4856 / JCM 11019 / LMG 10263 / NCTC 9343 / Onslow / VPI 2553 / EN-2).